We begin with the raw amino-acid sequence, 305 residues long: Putative HTH-type transcriptional regulatory protein Saci_1344 (305 aa).

The HTH cro/C1-type domain occupies 128 to 183; it reads LREKREEKNMSLGELSQRLGVSRISVYDYEKEDSYVSIEVAEKLIEIFGDEVIGDI. A DNA-binding region (H-T-H motif) is located at residues 139–158; sequence LGELSQRLGVSRISVYDYEK.

The protein is Putative HTH-type transcriptional regulatory protein Saci_1344 of Sulfolobus acidocaldarius (strain ATCC 33909 / DSM 639 / JCM 8929 / NBRC 15157 / NCIMB 11770).